The chain runs to 334 residues: Aspartate carbamoyltransferase catalytic subunit (334 aa).

Residues arginine 70 and threonine 71 each coordinate carbamoyl phosphate. Residue lysine 98 coordinates L-aspartate. Arginine 120, histidine 150, and glutamine 153 together coordinate carbamoyl phosphate. L-aspartate-binding residues include arginine 183 and arginine 239. Carbamoyl phosphate is bound by residues glycine 280 and proline 281.

This sequence belongs to the aspartate/ornithine carbamoyltransferase superfamily. ATCase family. In terms of assembly, heterododecamer (2C3:3R2) of six catalytic PyrB chains organized as two trimers (C3), and six regulatory PyrI chains organized as three dimers (R2).

It catalyses the reaction carbamoyl phosphate + L-aspartate = N-carbamoyl-L-aspartate + phosphate + H(+). The protein operates within pyrimidine metabolism; UMP biosynthesis via de novo pathway; (S)-dihydroorotate from bicarbonate: step 2/3. Catalyzes the condensation of carbamoyl phosphate and aspartate to form carbamoyl aspartate and inorganic phosphate, the committed step in the de novo pyrimidine nucleotide biosynthesis pathway. This chain is Aspartate carbamoyltransferase catalytic subunit, found in Pseudomonas paraeruginosa (strain DSM 24068 / PA7) (Pseudomonas aeruginosa (strain PA7)).